We begin with the raw amino-acid sequence, 209 residues long: Large ribosomal subunit protein uL3 (209 aa).

N5-methylglutamine is present on Gln150.

Belongs to the universal ribosomal protein uL3 family. Part of the 50S ribosomal subunit. Forms a cluster with proteins L14 and L19. In terms of processing, methylated by PrmB.

One of the primary rRNA binding proteins, it binds directly near the 3'-end of the 23S rRNA, where it nucleates assembly of the 50S subunit. The polypeptide is Large ribosomal subunit protein uL3 (Aliivibrio salmonicida (strain LFI1238) (Vibrio salmonicida (strain LFI1238))).